The primary structure comprises 514 residues: Putative binding protein HI_0213 (514 aa).

Residues M1–A23 form the signal peptide. The N-palmitoyl cysteine moiety is linked to residue C24. A lipid anchor (S-diacylglycerol cysteine) is attached at C24.

Belongs to the bacterial solute-binding protein 5 family.

It is found in the cell membrane. Part of a binding-protein-dependent transport system. In Haemophilus influenzae (strain ATCC 51907 / DSM 11121 / KW20 / Rd), this protein is Putative binding protein HI_0213.